The following is a 357-amino-acid chain: Uroporphyrinogen decarboxylase (357 aa).

Substrate-binding positions include 27-31, Asp-77, Tyr-154, Ser-209, and His-330; that span reads RQAGR.

Belongs to the uroporphyrinogen decarboxylase family. In terms of assembly, homodimer.

The protein resides in the cytoplasm. The enzyme catalyses uroporphyrinogen III + 4 H(+) = coproporphyrinogen III + 4 CO2. Its pathway is porphyrin-containing compound metabolism; protoporphyrin-IX biosynthesis; coproporphyrinogen-III from 5-aminolevulinate: step 4/4. Catalyzes the decarboxylation of four acetate groups of uroporphyrinogen-III to yield coproporphyrinogen-III. In Acinetobacter baumannii (strain AB0057), this protein is Uroporphyrinogen decarboxylase.